The following is a 110-amino-acid chain: Iron-sulfur cluster assembly protein CyaY (110 aa).

It belongs to the frataxin family.

Functionally, involved in iron-sulfur (Fe-S) cluster assembly. May act as a regulator of Fe-S biogenesis. The sequence is that of Iron-sulfur cluster assembly protein CyaY from Pseudomonas fluorescens (strain ATCC BAA-477 / NRRL B-23932 / Pf-5).